The chain runs to 604 residues: NADP-dependent malic enzyme, mitochondrial (604 aa).

The disordered stretch occupies residues 28–50 (SAPAQGCHSKSGPPRPVPLKKRG). Residue Y137 is the Proton donor of the active site. An NADP(+)-binding site is contributed by R190. Catalysis depends on K208, which acts as the Proton acceptor. A divalent metal cation contacts are provided by E280, D281, and D304. NADP(+) is bound at residue D304. Residue S371 is modified to Phosphoserine. N443 provides a ligand contact to NADP(+).

Belongs to the malic enzymes family. Mg(2+) serves as cofactor. Requires Mn(2+) as cofactor.

The protein localises to the mitochondrion matrix. It catalyses the reaction (S)-malate + NADP(+) = pyruvate + CO2 + NADPH. The enzyme catalyses oxaloacetate + H(+) = pyruvate + CO2. The chain is NADP-dependent malic enzyme, mitochondrial (Me3) from Mus musculus (Mouse).